Here is a 373-residue protein sequence, read N- to C-terminus: Histidinol-phosphate aminotransferase (373 aa).

K231 is modified (N6-(pyridoxal phosphate)lysine).

It belongs to the class-II pyridoxal-phosphate-dependent aminotransferase family. Histidinol-phosphate aminotransferase subfamily. It depends on pyridoxal 5'-phosphate as a cofactor.

It carries out the reaction L-histidinol phosphate + 2-oxoglutarate = 3-(imidazol-4-yl)-2-oxopropyl phosphate + L-glutamate. It functions in the pathway amino-acid biosynthesis; L-histidine biosynthesis; L-histidine from 5-phospho-alpha-D-ribose 1-diphosphate: step 7/9. This chain is Histidinol-phosphate aminotransferase (hisC), found in Methanocaldococcus jannaschii (strain ATCC 43067 / DSM 2661 / JAL-1 / JCM 10045 / NBRC 100440) (Methanococcus jannaschii).